The primary structure comprises 625 residues: Phosphomethylpyrimidine synthase (625 aa).

Residues asparagine 231, methionine 260, tyrosine 289, histidine 325, 345–347, 386–389, and glutamate 425 contribute to the substrate site; these read SRG and DGLR. Histidine 429 contributes to the Zn(2+) binding site. Tyrosine 452 contacts substrate. Histidine 493 lines the Zn(2+) pocket. Residues cysteine 573, cysteine 576, and cysteine 581 each coordinate [4Fe-4S] cluster.

This sequence belongs to the ThiC family. In terms of assembly, homodimer. Requires [4Fe-4S] cluster as cofactor.

The enzyme catalyses 5-amino-1-(5-phospho-beta-D-ribosyl)imidazole + S-adenosyl-L-methionine = 4-amino-2-methyl-5-(phosphooxymethyl)pyrimidine + CO + 5'-deoxyadenosine + formate + L-methionine + 3 H(+). It participates in cofactor biosynthesis; thiamine diphosphate biosynthesis. Its function is as follows. Catalyzes the synthesis of the hydroxymethylpyrimidine phosphate (HMP-P) moiety of thiamine from aminoimidazole ribotide (AIR) in a radical S-adenosyl-L-methionine (SAM)-dependent reaction. This chain is Phosphomethylpyrimidine synthase, found in Acinetobacter baumannii (strain SDF).